A 324-amino-acid polypeptide reads, in one-letter code: THUMP domain-containing protein 1 homolog (324 aa).

Disordered stretches follow at residues 1 to 24 (MEPA…KKYF) and 67 to 104 (SEKP…DDDD). The segment covering 68–80 (EKPENEPEKKQPE) has biased composition (basic and acidic residues). A Phosphothreonine modification is found at T99. S100 is modified (phosphoserine). One can recognise a THUMP domain in the interval 154–260 (DIATTGKSMS…RGWCLLSVID (107 aa)). Positions 275–324 (NPSDKKSSGEGDSKSETSEVANGNDKEQAESSEESKSNDDENKDSTENDK) are disordered. 2 stretches are compositionally biased toward basic and acidic residues: residues 277-291 (SDKK…KSET) and 298-324 (NDKE…ENDK).

It belongs to the THUMPD1 family.

The sequence is that of THUMP domain-containing protein 1 homolog from Drosophila melanogaster (Fruit fly).